Consider the following 195-residue polypeptide: NADH-quinone oxidoreductase subunit I (195 aa).

4Fe-4S ferredoxin-type domains lie at 44–74 (LNRYADGLEKCIGCELCAWACPADAIYVEGA) and 90–119 (QVYQINYLRCIGCGLCVEACPTRALTMTNE). [4Fe-4S] cluster is bound by residues Cys54, Cys57, Cys60, Cys64, Cys99, Cys102, Cys105, and Cys109. Residues 145 to 195 (MTAPPHALRPGTTQDDYYRGDITAVPEQAAPEQAAPEQPAPEREPNPETEK) form a disordered region. The span at 168-181 (AVPEQAAPEQAAPE) shows a compositional bias: low complexity. Residues 184 to 195 (APEREPNPETEK) show a composition bias toward basic and acidic residues.

The protein belongs to the complex I 23 kDa subunit family. As to quaternary structure, NDH-1 is composed of 14 different subunits. Subunits NuoA, H, J, K, L, M, N constitute the membrane sector of the complex. Requires [4Fe-4S] cluster as cofactor.

The protein resides in the cell membrane. The enzyme catalyses a quinone + NADH + 5 H(+)(in) = a quinol + NAD(+) + 4 H(+)(out). Its function is as follows. NDH-1 shuttles electrons from NADH, via FMN and iron-sulfur (Fe-S) centers, to quinones in the respiratory chain. The immediate electron acceptor for the enzyme in this species is believed to be ubiquinone. Couples the redox reaction to proton translocation (for every two electrons transferred, four hydrogen ions are translocated across the cytoplasmic membrane), and thus conserves the redox energy in a proton gradient. The sequence is that of NADH-quinone oxidoreductase subunit I from Rhodococcus erythropolis (strain PR4 / NBRC 100887).